The primary structure comprises 686 residues: ATP-dependent zinc metalloprotease FTSH 6, chloroplastic (686 aa).

Polar residues predominate over residues 1–14 (MSPTAMSLTTTTSR). Residues 1 to 52 (MSPTAMSLTTTTSRLPICRAQGGGVAKEKRTTPPPAKITPPSSSSSEAAGLS) are disordered. The N-terminal 75 residues, 1-75 (MSPTAMSLTT…LGLTAARPAR (75 aa)), are a transit peptide targeting the chloroplast. Residues 39–52 (TPPSSSSSEAAGLS) show a composition bias toward low complexity. A helical transmembrane segment spans residues 164–184 (VMLLDLLVNFGFPLLFVASLL). 261-268 (GPPGTGKT) contributes to the ATP binding site. His483 serves as a coordination point for Zn(2+). Glu484 is a catalytic residue. Residues His487 and Asp562 each contribute to the Zn(2+) site.

It in the N-terminal section; belongs to the AAA ATPase family. The protein in the C-terminal section; belongs to the peptidase M41 family. Zn(2+) is required as a cofactor.

It is found in the plastid. The protein localises to the chloroplast thylakoid membrane. Probable ATP-dependent zinc metallopeptidase. This is ATP-dependent zinc metalloprotease FTSH 6, chloroplastic (FTSH6) from Oryza sativa subsp. japonica (Rice).